We begin with the raw amino-acid sequence, 406 residues long: uncharacterized protein (406 aa).

This is an uncharacterized protein from Escherichia coli (strain K12).